Reading from the N-terminus, the 358-residue chain is MKPFPRAEISAQALKNNLSRLRQIAPNSSVMAVVKANGYGHGLLNVASCLTEADGFGLARLEEALALRAGGVKAKLVLLEGFFRQVDLTTLVEHGIDTVIHNEVQLDMLENASLSKPVTVWLKLDSGMHRLGFTPEQFAQVYARLEACPQVAKPINIMSHFACADEPDNPMTQEQLQVFEALTKNSKGYRTLANSAGTLYWPDSQADWIRPGIALYGVSPVIGDLGRNHGLEPAMKLVSQLIAVREHKAGQPVGYGCFWHAKADTRLGVVAIGYGDGYPRNAPEGTPVWVNGRRVPVVGRVSMDMLTVDLGIDAKDSIGDDVVLWGKELPVEEVAEHIGTIAYELVTKLTPRVAVCLD.

The active-site Proton acceptor; specific for D-alanine is the K35. K35 carries the N6-(pyridoxal phosphate)lysine modification. R130 serves as a coordination point for substrate. Catalysis depends on Y255, which acts as the Proton acceptor; specific for L-alanine. Position 303 (M303) interacts with substrate.

This sequence belongs to the alanine racemase family. Requires pyridoxal 5'-phosphate as cofactor.

It carries out the reaction L-alanine = D-alanine. It participates in amino-acid biosynthesis; D-alanine biosynthesis; D-alanine from L-alanine: step 1/1. Catalyzes the interconversion of L-alanine and D-alanine. May also act on other amino acids. The sequence is that of Alanine racemase (alr) from Shewanella woodyi (strain ATCC 51908 / MS32).